A 213-amino-acid polypeptide reads, in one-letter code: Orotate phosphoribosyltransferase (213 aa).

Lys26 contributes to the 5-phospho-alpha-D-ribose 1-diphosphate binding site. Position 34 to 35 (34 to 35 (FF)) interacts with orotate. Residues 72–73 (YK), Arg99, Lys100, Lys103, His105, and 124–132 (DDVITAGTA) contribute to the 5-phospho-alpha-D-ribose 1-diphosphate site. Residues Thr128 and Arg156 each contribute to the orotate site.

This sequence belongs to the purine/pyrimidine phosphoribosyltransferase family. PyrE subfamily. Homodimer. It depends on Mg(2+) as a cofactor.

The catalysed reaction is orotidine 5'-phosphate + diphosphate = orotate + 5-phospho-alpha-D-ribose 1-diphosphate. It participates in pyrimidine metabolism; UMP biosynthesis via de novo pathway; UMP from orotate: step 1/2. In terms of biological role, catalyzes the transfer of a ribosyl phosphate group from 5-phosphoribose 1-diphosphate to orotate, leading to the formation of orotidine monophosphate (OMP). This chain is Orotate phosphoribosyltransferase, found in Shigella sonnei (strain Ss046).